Reading from the N-terminus, the 584-residue chain is Arginine--tRNA ligase (584 aa).

The short motif at 126–136 is the 'HIGH' region element; sequence PNIAKEMHVGH.

The protein belongs to the class-I aminoacyl-tRNA synthetase family. As to quaternary structure, monomer.

It is found in the cytoplasm. The enzyme catalyses tRNA(Arg) + L-arginine + ATP = L-arginyl-tRNA(Arg) + AMP + diphosphate. The protein is Arginine--tRNA ligase of Nostoc punctiforme (strain ATCC 29133 / PCC 73102).